The primary structure comprises 60 residues: Large ribosomal subunit protein bL32 (60 aa).

The span at 1–19 shows a compositional bias: basic residues; that stretch reads MAVPKRKKSKSRRNMHRSH. The interval 1 to 24 is disordered; it reads MAVPKRKKSKSRRNMHRSHHAIEP.

The protein belongs to the bacterial ribosomal protein bL32 family.

The protein is Large ribosomal subunit protein bL32 of Wolbachia pipientis wMel.